The chain runs to 418 residues: L-rhamnose isomerase (418 aa).

H262, D294, and D296 together coordinate Mn(2+).

It belongs to the rhamnose isomerase family. As to quaternary structure, homotetramer. Requires Mn(2+) as cofactor.

Its subcellular location is the cytoplasm. The catalysed reaction is L-rhamnopyranose = L-rhamnulose. It functions in the pathway carbohydrate degradation; L-rhamnose degradation; glycerone phosphate from L-rhamnose: step 1/3. Functionally, catalyzes the interconversion of L-rhamnose and L-rhamnulose. This is L-rhamnose isomerase from Yersinia pseudotuberculosis serotype IB (strain PB1/+).